Reading from the N-terminus, the 248-residue chain is HTH-type transcriptional regulator GgaR (248 aa).

One can recognise an HTH gntR-type domain in the interval 22-90 (TPLYIKFAET…RGYGTQINNI (69 aa)). Positions 50 to 69 (ERDLSQLTGVSRITVRKAMQ) form a DNA-binding region, H-T-H motif.

Its activity is regulated as follows. Senses ADP-glucose (ADPG), which is the substrate for glycogen elongation, as an effector. In the presence of ADPG, GgaR becomes inactive and derepresses the yegTUV operon, leading to glycogen accumulation. In contrast, in the absence of glucose, the concentration of ADPG decreases, GgaR becomes active, and glycogen accumulation is repressed. Its function is as follows. Transcriptional regulator that regulates glycogen accumulation in response to the amount of glucose available to the cell. Acts as a repressor of the yegTUV operon, which may be involved in glycogen accumulation. The chain is HTH-type transcriptional regulator GgaR from Escherichia coli O6:H1 (strain CFT073 / ATCC 700928 / UPEC).